Reading from the N-terminus, the 630-residue chain is L-amino-acid oxidase (630 aa).

Positions 1 to 21 (MAGLALRLVLAATLLGLAGSL) are cleaved as a signal peptide. The cysteines at positions 35 and 198 are disulfide-linked. Asn53 carries N-linked (GlcNAc...) asparagine glycosylation. Residues 68–69 (VA), 88–89 (EA), Arg96, and 112–115 (GAMR) each bind FAD. Arg115 lines the substrate pocket. Residues Asn133 and Asn219 are each glycosylated (N-linked (GlcNAc...) asparagine). Residue Val286 coordinates FAD. Tyr395 is a substrate binding site. FAD-binding positions include Glu479 and 486 to 491 (GWVETA). 486–487 (GW) contacts substrate. Residues 532 to 554 (GERPEEQQAREEVSPDEQEPSHK) are disordered.

This sequence belongs to the flavin monoamine oxidase family. FIG1 subfamily. It depends on FAD as a cofactor. Primarily found in immune tissues. In terms of tissue distribution, primarily found in immune tissues, mostly in B-lymphocytes. As to expression, restricted to the testis, predominantly in Sertoli cells at the periphery of the ducts, and the brain, including Purkinje cells, hippocampus and mitral cells in the olfactory bulb. No isoform 2 expression in fetal tissues.

It localises to the secreted. The protein localises to the cytoplasmic vesicle. The protein resides in the secretory vesicle. Its subcellular location is the acrosome. It is found in the lysosome. It catalyses the reaction an L-alpha-amino acid + O2 + H2O = a 2-oxocarboxylate + H2O2 + NH4(+). The catalysed reaction is L-tryptophan + O2 + H2O = indole-3-pyruvate + H2O2 + NH4(+). It carries out the reaction L-phenylalanine + O2 + H2O = 3-phenylpyruvate + H2O2 + NH4(+). The enzyme catalyses L-tyrosine + O2 + H2O = 3-(4-hydroxyphenyl)pyruvate + H2O2 + NH4(+). It catalyses the reaction L-arginine + O2 + H2O = 5-guanidino-2-oxopentanoate + H2O2 + NH4(+). The protein operates within amino-acid degradation; L-tryptophan degradation via pyruvate pathway. Its function is as follows. Secreted L-amino-acid oxidase that acts as a key immunoregulator. Has preference for L-aromatic amino acids: converts phenylalanine (Phe), tyrosine (Tyr) and tryptophan (Trp) to phenylpyruvic acid (PP), hydroxyphenylpyruvic acid (HPP), and indole-3-pyruvic acid (I3P), respectively. Also has weak L-arginine oxidase activity. Acts as a negative regulator of anti-tumor immunity by mediating Trp degradation via an indole pyruvate pathway that activates the transcription factor AHR. IL4I1-mediated Trp catabolism generates I3P, giving rise to indole metabolites (indole-3-acetic acid (IAA) and indole-3-aldehyde (I3A)) and kynurenic acid, which act as ligands for AHR, a ligand-activated transcription factor that plays important roles in immunity and cancer. AHR activation by indoles following IL4I1-mediated Trp degradation enhances tumor progression by promoting cancer cell motility and suppressing adaptive immunity. Also has an immunoregulatory function in some immune cell, probably by mediating Trp degradation and promoting downstream AHR activation: inhibits T-cell activation and proliferation, promotes the differentiation of naive CD4(+) T-cells into FOXP3(+) regulatory T-cells (Treg) and regulates the development and function of B-cells. Also regulates M2 macrophage polarization by inhibiting T-cell activation. Also has antibacterial properties by inhibiting growth of Gram negative and Gram positive bacteria through the production of NH4(+) and H2O2. The polypeptide is L-amino-acid oxidase (Mus musculus (Mouse)).